A 122-amino-acid polypeptide reads, in one-letter code: Nuclear transcription factor Y subunit beta (122 aa).

The subunit association domain (SAD) stretch occupies residues 1-12 (VQECVSEFISFI). The segment at 1-57 (VQECVSEFISFITSEASERCHQEKRKTINGEDILFAMSTLGFDSYVEPLKLYLQKFR) is b domain. A c domain region spans residues 58–122 (EAMKGEKGIG…ISGVQQIQFS (65 aa)).

Belongs to the NFYB/HAP3 subunit family. Heterotrimeric transcription factor composed of three components, NF-YA, NF-YB and NF-YC. NF-YB and NF-YC must interact and dimerize for NF-YA association and DNA binding.

It is found in the nucleus. Component of the sequence-specific heterotrimeric transcription factor (NF-Y) which specifically recognizes a 5'-CCAAT-3' box motif found in the promoters of its target genes. NF-Y can function as both an activator and a repressor, depending on its interacting cofactors. The polypeptide is Nuclear transcription factor Y subunit beta (nfyb) (Xenopus laevis (African clawed frog)).